A 207-amino-acid chain; its full sequence is Large ribosomal subunit protein uL4 (207 aa).

The segment at 43–85 (SRRQGTHDTKGRSEVRGGGRKPWKQKGTGRARQGSIRSPQWVG) is disordered. Positions 47-59 (GTHDTKGRSEVRG) are enriched in basic and acidic residues. A compositionally biased stretch (basic residues) spans 60-71 (GGRKPWKQKGTG).

It belongs to the universal ribosomal protein uL4 family. In terms of assembly, part of the 50S ribosomal subunit.

In terms of biological role, one of the primary rRNA binding proteins, this protein initially binds near the 5'-end of the 23S rRNA. It is important during the early stages of 50S assembly. It makes multiple contacts with different domains of the 23S rRNA in the assembled 50S subunit and ribosome. Functionally, forms part of the polypeptide exit tunnel. This Exiguobacterium sibiricum (strain DSM 17290 / CCUG 55495 / CIP 109462 / JCM 13490 / 255-15) protein is Large ribosomal subunit protein uL4.